The chain runs to 252 residues: Probable 6-phosphogluconolactonase 5 (252 aa).

The protein belongs to the glucosamine/galactosamine-6-phosphate isomerase family. 6-phosphogluconolactonase subfamily.

The protein localises to the cytoplasm. It localises to the cytosol. The enzyme catalyses 6-phospho-D-glucono-1,5-lactone + H2O = 6-phospho-D-gluconate + H(+). The protein operates within carbohydrate degradation; pentose phosphate pathway; D-ribulose 5-phosphate from D-glucose 6-phosphate (oxidative stage): step 2/3. Its function is as follows. Catalyzes the hydrolysis of 6-phosphogluconolactone to 6-phosphogluconate. In Arabidopsis thaliana (Mouse-ear cress), this protein is Probable 6-phosphogluconolactonase 5.